A 630-amino-acid chain; its full sequence is tRNA uridine 5-carboxymethylaminomethyl modification enzyme MnmG (630 aa).

14 to 19 contacts FAD; that stretch reads GGGHAG. 282 to 296 is an NAD(+) binding site; the sequence is GTRYCPSIEDKVRKF.

Belongs to the MnmG family. As to quaternary structure, homodimer. Heterotetramer of two MnmE and two MnmG subunits. FAD serves as cofactor.

The protein resides in the cytoplasm. In terms of biological role, NAD-binding protein involved in the addition of a carboxymethylaminomethyl (cmnm) group at the wobble position (U34) of certain tRNAs, forming tRNA-cmnm(5)s(2)U34. This Treponema pallidum (strain Nichols) protein is tRNA uridine 5-carboxymethylaminomethyl modification enzyme MnmG.